The chain runs to 255 residues: Methanethiol S-methyltransferase (255 aa).

Helical transmembrane passes span 16-36, 56-76, 99-119, 131-151, and 191-211; these read FVLL…VYAV, LVTA…QHSV, YVLF…PIGI, IIFY…TFLI, and VGWF…LVFA.

The protein belongs to the nurim family.

The protein resides in the membrane. It carries out the reaction methanethiol + S-adenosyl-L-methionine = dimethyl sulfide + S-adenosyl-L-homocysteine + H(+). Catalyzes the methylation of methanethiol (MeSH) to yield dimethylsulphide (DMS). The polypeptide is Methanethiol S-methyltransferase (Crocosphaera subtropica (strain ATCC 51142 / BH68) (Cyanothece sp. (strain ATCC 51142))).